Reading from the N-terminus, the 57-residue chain is UPF0391 membrane protein bsl5717 (57 aa).

2 helical membrane-spanning segments follow: residues 6-26 (WALIFLLVSIVAGVLGFTGIS) and 35-55 (FLFYVFVVIFLVLLILGLTIF).

The protein belongs to the UPF0391 family.

Its subcellular location is the cell membrane. The chain is UPF0391 membrane protein bsl5717 from Bradyrhizobium diazoefficiens (strain JCM 10833 / BCRC 13528 / IAM 13628 / NBRC 14792 / USDA 110).